The chain runs to 446 residues: Histidine--tRNA ligase (446 aa).

The protein belongs to the class-II aminoacyl-tRNA synthetase family. As to quaternary structure, homodimer.

The protein localises to the cytoplasm. The catalysed reaction is tRNA(His) + L-histidine + ATP = L-histidyl-tRNA(His) + AMP + diphosphate + H(+). The polypeptide is Histidine--tRNA ligase (Burkholderia pseudomallei (strain K96243)).